The sequence spans 101 residues: CYC02 protein (101 aa).

One copy of the 1; approximate repeat lies at 42–64 (DAVCHHGCCRWFHHRCVRCCRSA). A 2 X approximate repeats region spans residues 42 to 101 (DAVCHHGCCRWFHHRCVRCCRSAEEVSVSDTENNAAADAHCRHGCCRWFHGRCIRCCPSA). A 2; approximate repeat occupies 79–101 (DAHCRHGCCRWFHGRCIRCCPSA).

The protein belongs to the GRP family.

May be involved in the control of the cell cycle at the G1/S start transition. This Catharanthus roseus (Madagascar periwinkle) protein is CYC02 protein (CYC02).